The chain runs to 858 residues: Leucine--tRNA ligase (858 aa).

The 'HIGH' region motif lies at 42-52 (PYPSGRLHMGH). The 'KMSKS' region signature appears at 618-622 (KMSKS). Lys621 is an ATP binding site.

This sequence belongs to the class-I aminoacyl-tRNA synthetase family.

The protein localises to the cytoplasm. It catalyses the reaction tRNA(Leu) + L-leucine + ATP = L-leucyl-tRNA(Leu) + AMP + diphosphate. This Vibrio cholerae serotype O1 (strain ATCC 39315 / El Tor Inaba N16961) protein is Leucine--tRNA ligase.